The sequence spans 61 residues: MDPNCSCASDGSCSCAGACKCKQCKCTSCKKSCCSCCPVGCAKCSQGCICKEASDKCSCCA.

The residue at position 1 (M1) is an N-acetylmethionine. Positions 1–29 (MDPNCSCASDGSCSCAGACKCKQCKCTSC) are beta. Residues C5, C7, C13, C15, C19, C21, C24, C26, C29, C33, C34, C36, C37, C41, C44, C48, C50, and C57 each coordinate a divalent metal cation. Residues 30–61 (KKSCCSCCPVGCAKCSQGCICKEASDKCSCCA) are alpha. Phosphoserine is present on S58. A divalent metal cation contacts are provided by C59 and C60.

This sequence belongs to the metallothionein superfamily. Type 1 family.

In terms of biological role, metallothioneins have a high content of cysteine residues that bind various heavy metals; these proteins are transcriptionally regulated by both heavy metals and glucocorticoids. The polypeptide is Metallothionein-2 (Mt2) (Mus musculus (Mouse)).